We begin with the raw amino-acid sequence, 203 residues long: FMN-dependent NADH:quinone oxidoreductase 3 (203 aa).

FMN-binding positions include Ser9, 15-17 (SAS), 95-98 (MYNF), and 139-142 (TAGG).

The protein belongs to the azoreductase type 1 family. Homodimer. Requires FMN as cofactor.

It carries out the reaction 2 a quinone + NADH + H(+) = 2 a 1,4-benzosemiquinone + NAD(+). The catalysed reaction is N,N-dimethyl-1,4-phenylenediamine + anthranilate + 2 NAD(+) = 2-(4-dimethylaminophenyl)diazenylbenzoate + 2 NADH + 2 H(+). Its function is as follows. Quinone reductase that provides resistance to thiol-specific stress caused by electrophilic quinones. Functionally, also exhibits azoreductase activity. Catalyzes the reductive cleavage of the azo bond in aromatic azo compounds to the corresponding amines. This is FMN-dependent NADH:quinone oxidoreductase 3 from Pseudomonas fluorescens (strain Pf0-1).